Consider the following 244-residue polypeptide: Krueppel-like factor 9 (244 aa).

Disordered stretches follow at residues V24–G51 and S80–R142. A compositionally biased stretch (basic and acidic residues) spans D32 to G51. S122 carries the post-translational modification Phosphoserine. C2H2-type zinc fingers lie at residues H143–H167, F173–H197, and F203–H225.

The protein belongs to the Sp1 C2H2-type zinc-finger protein family. As to quaternary structure, interacts with ZZEF1.

It localises to the nucleus. Its function is as follows. Transcription factor that binds to GC box promoter elements. Selectively activates mRNA synthesis from genes containing tandem repeats of GC boxes but represses genes with a single GC box. Acts as an epidermal circadian transcription factor regulating keratinocyte proliferation. The sequence is that of Krueppel-like factor 9 (KLF9) from Sus scrofa (Pig).